The sequence spans 473 residues: Cysteine--tRNA ligase (473 aa).

Residue cysteine 29 participates in Zn(2+) binding. Residues 31–41 (ATVQSAPHIGH) carry the 'HIGH' region motif. Residues cysteine 207, histidine 232, and glutamate 236 each contribute to the Zn(2+) site. Positions 263–267 (KMSKS) match the 'KMSKS' region motif. Lysine 266 contacts ATP.

It belongs to the class-I aminoacyl-tRNA synthetase family. Monomer. It depends on Zn(2+) as a cofactor.

It localises to the cytoplasm. It catalyses the reaction tRNA(Cys) + L-cysteine + ATP = L-cysteinyl-tRNA(Cys) + AMP + diphosphate. This Corynebacterium kroppenstedtii (strain DSM 44385 / JCM 11950 / CIP 105744 / CCUG 35717) protein is Cysteine--tRNA ligase.